The chain runs to 439 residues: Methylenetetrahydrofolate--tRNA-(uracil-5-)-methyltransferase TrmFO (439 aa).

Position 7–12 (7–12) interacts with FAD; sequence GAGLAG.

It belongs to the MnmG family. TrmFO subfamily. It depends on FAD as a cofactor.

The protein resides in the cytoplasm. It catalyses the reaction uridine(54) in tRNA + (6R)-5,10-methylene-5,6,7,8-tetrahydrofolate + NADH + H(+) = 5-methyluridine(54) in tRNA + (6S)-5,6,7,8-tetrahydrofolate + NAD(+). The catalysed reaction is uridine(54) in tRNA + (6R)-5,10-methylene-5,6,7,8-tetrahydrofolate + NADPH + H(+) = 5-methyluridine(54) in tRNA + (6S)-5,6,7,8-tetrahydrofolate + NADP(+). Catalyzes the folate-dependent formation of 5-methyl-uridine at position 54 (M-5-U54) in all tRNAs. The polypeptide is Methylenetetrahydrofolate--tRNA-(uracil-5-)-methyltransferase TrmFO (Heliobacterium modesticaldum (strain ATCC 51547 / Ice1)).